We begin with the raw amino-acid sequence, 619 residues long: DNA mismatch repair protein MutL (619 aa).

Positions glycine 358–glycine 401 are disordered.

This sequence belongs to the DNA mismatch repair MutL/HexB family.

In terms of biological role, this protein is involved in the repair of mismatches in DNA. It is required for dam-dependent methyl-directed DNA mismatch repair. May act as a 'molecular matchmaker', a protein that promotes the formation of a stable complex between two or more DNA-binding proteins in an ATP-dependent manner without itself being part of a final effector complex. The chain is DNA mismatch repair protein MutL from Klebsiella pneumoniae (strain 342).